A 449-amino-acid polypeptide reads, in one-letter code: UDP-N-acetylmuramoylalanine--D-glutamate ligase (449 aa).

118 to 124 (GSNGKTT) serves as a coordination point for ATP.

The protein belongs to the MurCDEF family.

It localises to the cytoplasm. It carries out the reaction UDP-N-acetyl-alpha-D-muramoyl-L-alanine + D-glutamate + ATP = UDP-N-acetyl-alpha-D-muramoyl-L-alanyl-D-glutamate + ADP + phosphate + H(+). Its pathway is cell wall biogenesis; peptidoglycan biosynthesis. Cell wall formation. Catalyzes the addition of glutamate to the nucleotide precursor UDP-N-acetylmuramoyl-L-alanine (UMA). The chain is UDP-N-acetylmuramoylalanine--D-glutamate ligase from Oceanobacillus iheyensis (strain DSM 14371 / CIP 107618 / JCM 11309 / KCTC 3954 / HTE831).